Reading from the N-terminus, the 458-residue chain is SLIT-ROBO Rho GTPase-activating protein 2B (458 aa).

An F-BAR domain is found at 22–324 (KEIRAQLTEQ…AVENLDATSD (303 aa)). Basic and acidic residues predominate over residues 181–203 (LKEAEKQEEKQIGKSVKQEDRQT). A disordered region spans residues 181-214 (LKEAEKQEEKQIGKSVKQEDRQTPRSPDSTANVR). Residues 362–400 (QSELLQRCQQLQSRLSTLKIENEEVKKTMEATLQTIQDI) adopt a coiled-coil conformation.

In terms of assembly, may interact with SRGAP2; formation of the heterodimer alters SRGAP2 function.

May regulate cell migration and differentiation through interaction with and inhibition of SRGAP2. In contrast to SRGAP2C, it is not able to induce long-lasting changes in synaptic density throughout adulthood. In Homo sapiens (Human), this protein is SLIT-ROBO Rho GTPase-activating protein 2B (SRGAP2B).